The following is a 90-amino-acid chain: MMKTAVMFILVVVISLTYSSEEQEVARTYCGRHLANILAYVCFGVEKRGGAQYAPYWQETYLRSRKGPGVVDECCFRPCKLEVLKSYCGV.

A signal peptide spans 1 to 20 (MMKTAVMFILVVVISLTYSS). Disulfide bonds link Cys-30-Cys-75, Cys-42-Cys-88, and Cys-74-Cys-79. Residues 49–64 (GGAQYAPYWQETYLRS) constitute a propeptide, c peptide like.

This sequence belongs to the insulin family. As to quaternary structure, heterodimer of a B chain and an A chain linked by two disulfide bonds.

The protein localises to the secreted. Its function is as follows. Brain peptide responsible for activation of prothoracic glands to produce ecdysone in insects. The polypeptide is Bombyxin B-5 (BBXB5) (Bombyx mori (Silk moth)).